Consider the following 474-residue polypeptide: Glycogen synthase (474 aa).

Lys-15 lines the ADP-alpha-D-glucose pocket.

It belongs to the glycosyltransferase 1 family. Bacterial/plant glycogen synthase subfamily.

It catalyses the reaction [(1-&gt;4)-alpha-D-glucosyl](n) + ADP-alpha-D-glucose = [(1-&gt;4)-alpha-D-glucosyl](n+1) + ADP + H(+). Its pathway is glycan biosynthesis; glycogen biosynthesis. Synthesizes alpha-1,4-glucan chains using ADP-glucose. The sequence is that of Glycogen synthase from Chlamydia trachomatis serovar L2b (strain UCH-1/proctitis).